Consider the following 202-residue polypeptide: Small ribosomal subunit protein uS4c (202 aa).

The 70-residue stretch at 90 to 159 (MRLDNIIFRL…TKNYEFSQTY (70 aa)) folds into the S4 RNA-binding domain.

The protein belongs to the universal ribosomal protein uS4 family. As to quaternary structure, part of the 30S ribosomal subunit. Contacts protein S5. The interaction surface between S4 and S5 is involved in control of translational fidelity.

The protein localises to the plastid. The protein resides in the chloroplast. Its function is as follows. One of the primary rRNA binding proteins, it binds directly to 16S rRNA where it nucleates assembly of the body of the 30S subunit. With S5 and S12 plays an important role in translational accuracy. In Huperzia lucidula (Shining clubmoss), this protein is Small ribosomal subunit protein uS4c (rps4).